The sequence spans 160 residues: Protein cornichon homolog 2 (160 aa).

At 1–10 (MAFTFAAFCY) the chain is on the cytoplasmic side. The helical transmembrane segment at 11–31 (MLTLVLCASLIFFVIWHIIAF) threads the bilayer. At 32-72 (DELRTDFKNPIDQGNPARARERLKNIERICCLLRKLVVPEY) the chain is on the lumenal side. The helical transmembrane segment at 73-93 (SIHGLFCLMFLCAAEWVTLGL) threads the bilayer. Residues 94–138 (NIPLLFYHLWRYFHRPADGSEVMYDAVSIMNADILNYCQKESWCK) lie on the Cytoplasmic side of the membrane. The chain crosses the membrane as a helical span at residues 139–159 (LAFYLLSFFYYLYSMVYTLVS). F160 is a topological domain (lumenal).

This sequence belongs to the cornichon family. Acts as an auxiliary subunit for AMPA-selective glutamate receptors (AMPARs). Found in a complex with GRIA1, GRIA2, GRIA3, GRIA4, CNIH3, CACNG2, CACNG3, CACNG4, CACNG5, CACNG7 and CACNG8. Interacts with CACGN8. Interacts with GRIA1. Found in a complex with GRIA1, GRIA2, GRIA3, GRIA4, DLG4 and CACNG8. In terms of tissue distribution, expression is up-regulated in dorsolateral prefrontal cortex of patients with schizophrenia (postmortem brain study).

Its subcellular location is the endoplasmic reticulum membrane. The protein resides in the postsynaptic cell membrane. The protein localises to the cell projection. It is found in the dendrite. It localises to the dendritic spine. Its subcellular location is the postsynaptic density. Its function is as follows. Regulates the trafficking and gating properties of AMPA-selective glutamate receptors (AMPARs). Promotes their targeting to the cell membrane and synapses and modulates their gating properties by regulating their rates of activation, deactivation and desensitization. Blocks CACNG8-mediated resensitization of AMPA receptors. The sequence is that of Protein cornichon homolog 2 from Homo sapiens (Human).